A 271-amino-acid polypeptide reads, in one-letter code: 3-methyl-2-oxobutanoate hydroxymethyltransferase 1 (271 aa).

Residues Asp53 and Asp92 each contribute to the Mg(2+) site. Residues 53–54, Asp92, and Lys120 each bind 3-methyl-2-oxobutanoate; that span reads DS. Glu122 contributes to the Mg(2+) binding site. The Proton acceptor role is filled by Glu189.

It belongs to the PanB family. In terms of assembly, homodecamer; pentamer of dimers. Requires Mg(2+) as cofactor.

The protein resides in the cytoplasm. It catalyses the reaction 3-methyl-2-oxobutanoate + (6R)-5,10-methylene-5,6,7,8-tetrahydrofolate + H2O = 2-dehydropantoate + (6S)-5,6,7,8-tetrahydrofolate. Its pathway is cofactor biosynthesis; (R)-pantothenate biosynthesis; (R)-pantoate from 3-methyl-2-oxobutanoate: step 1/2. Catalyzes the reversible reaction in which hydroxymethyl group from 5,10-methylenetetrahydrofolate is transferred onto alpha-ketoisovalerate to form ketopantoate. In Burkholderia cenocepacia (strain HI2424), this protein is 3-methyl-2-oxobutanoate hydroxymethyltransferase 1.